Reading from the N-terminus, the 186-residue chain is uncharacterized protein (186 aa).

This is an uncharacterized protein from Methanocaldococcus jannaschii (strain ATCC 43067 / DSM 2661 / JAL-1 / JCM 10045 / NBRC 100440) (Methanococcus jannaschii).